Reading from the N-terminus, the 246-residue chain is tRNA (guanine-N(7)-)-methyltransferase (246 aa).

S-adenosyl-L-methionine contacts are provided by glutamate 77, glutamate 102, aspartate 129, and aspartate 152. Aspartate 152 is an active-site residue. Substrate-binding positions include lysine 156, aspartate 188, and 225–228 (TKFE).

Belongs to the class I-like SAM-binding methyltransferase superfamily. TrmB family.

The enzyme catalyses guanosine(46) in tRNA + S-adenosyl-L-methionine = N(7)-methylguanosine(46) in tRNA + S-adenosyl-L-homocysteine. It functions in the pathway tRNA modification; N(7)-methylguanine-tRNA biosynthesis. Functionally, catalyzes the formation of N(7)-methylguanine at position 46 (m7G46) in tRNA. The protein is tRNA (guanine-N(7)-)-methyltransferase of Haemophilus influenzae (strain PittGG).